Here is a 428-residue protein sequence, read N- to C-terminus: AP-1 complex subunit mu-2 (428 aa).

An MHD domain is found at 170-426; sequence KNEVFLDVIE…ITMAGEYELR (257 aa).

It belongs to the adaptor complexes medium subunit family. As to quaternary structure, adaptor protein complex 1 (AP-1) is a heterotetramer composed of two large adaptins (gamma-type subunit and beta-type subunit), a medium adaptin (mu-type subunit) and a small adaptin (sigma-type subunit). In terms of tissue distribution, ubiquitous.

The protein localises to the golgi apparatus. The protein resides in the trans-Golgi network membrane. It localises to the early endosome membrane. Its subcellular location is the cytoplasmic vesicle. It is found in the clathrin-coated vesicle membrane. Functionally, subunit of clathrin-associated adaptor protein complex 1 that plays a role in protein sorting at the trans-Golgi network and early endosomes (TGN/EE). The AP complexes mediate the recruitment of clathrin to membranes and the recognition of sorting signals within the cytosolic tails of transmembrane cargo molecules. Required for KNOLLE localization at the cell plate to mediate cytokinesis. Functions redundantly with AP1M1 in multiple post-Golgi trafficking pathways leading from the TGN to the vacuole, the plasma membrane, and the cell-division plane. This Arabidopsis thaliana (Mouse-ear cress) protein is AP-1 complex subunit mu-2 (AP1M2).